We begin with the raw amino-acid sequence, 669 residues long: UvrABC system protein C (669 aa).

Residues threonine 16 to valine 95 enclose the GIY-YIG domain. A UVR domain is found at lysine 207–valine 242.

This sequence belongs to the UvrC family. As to quaternary structure, interacts with UvrB in an incision complex.

The protein resides in the cytoplasm. Functionally, the UvrABC repair system catalyzes the recognition and processing of DNA lesions. UvrC both incises the 5' and 3' sides of the lesion. The N-terminal half is responsible for the 3' incision and the C-terminal half is responsible for the 5' incision. In Arthrobacter sp. (strain FB24), this protein is UvrABC system protein C.